The following is a 91-amino-acid chain: Protein SPATA45 homolog (91 aa).

Residues 42 to 91 (RADRKHDPNGFNSSVFKGASNQHQESSLDFATAEPEFHRERRHFPEKSEY) are disordered. A compositionally biased stretch (polar residues) spans 51–70 (GFNSSVFKGASNQHQESSLD). A compositionally biased stretch (basic and acidic residues) spans 76-91 (PEFHRERRHFPEKSEY).

It belongs to the SPATA45 family.

In Nematostella vectensis (Starlet sea anemone), this protein is Protein SPATA45 homolog.